We begin with the raw amino-acid sequence, 559 residues long: MAKLLSFSDESRSALERGVDALADAVRVTIGPRGRNVVLEKKFGAPDIVNDGDSIAREIELDDPFENLGAKLMQQVASKTKDKAGDGTTTATVLAQAMVREGLRNTAAGASPVELRRGMEKAAAHIVAGLSERSQAIAGDAIRQVATVSSGGDEEVGRMIAEAMDKVSTDGVITVEESKSLATELEITEGMAFDRGYSSPYFVTDADRQVCEFDNPLILLTDRKISTITDLVPVLETVQKSGSPLLILSEEVEGEALATLVMNKSRGVLQVAAVRAPSFGERRKAALADIAILTGGTLISEDKAMTLDKVTLEDLGKARRVTISKENTTIVANDDHRQAVSERVSAIRRELEATESDYDREKLQERIAKLAGGVAVIKVGAPTETELKNRKLRIEDALNATRAAVEEGIVAGGGSTLLQLADSLDALASSLNGDQRTGVEIVQRALTAPIHQIATNAGQNGDVVIAGMRSSGQGFNALSGVYEDLMAAGIVDAAKVVRLAVQDSISIASLLITTEVVIADKPEPPAPAPAGDGDPMGGMGGMGGMGMPGMGGMGMPGMM.

ATP is bound by residues 29–32 (TIGP), 86–90 (DGTTT), glycine 413, 476–478 (NAL), and aspartate 492. The tract at residues 521–541 (KPEPPAPAPAGDGDPMGGMGG) is disordered.

The protein belongs to the chaperonin (HSP60) family. In terms of assembly, forms a cylinder of 14 subunits composed of two heptameric rings stacked back-to-back. Interacts with the co-chaperonin GroES.

The protein resides in the cytoplasm. The catalysed reaction is ATP + H2O + a folded polypeptide = ADP + phosphate + an unfolded polypeptide.. Together with its co-chaperonin GroES, plays an essential role in assisting protein folding. The GroEL-GroES system forms a nano-cage that allows encapsulation of the non-native substrate proteins and provides a physical environment optimized to promote and accelerate protein folding. The polypeptide is Chaperonin GroEL 1 (Synechococcus sp. (strain CC9605)).